The primary structure comprises 179 residues: Fas apoptotic inhibitory molecule 1 (179 aa).

The residue at position 2 (threonine 2) is an N-acetylthreonine.

It belongs to the FAIM1 family. In terms of tissue distribution, widely expressed, with the highest levels in brain, thymus, kidney, and spleen.

Its subcellular location is the cytoplasm. Its function is as follows. Plays a role as an inducible effector molecule that mediates Fas resistance produced by surface Ig engagement in B cells. In Mus musculus (Mouse), this protein is Fas apoptotic inhibitory molecule 1 (Faim).